The primary structure comprises 309 residues: Probable manganese-dependent inorganic pyrophosphatase (309 aa).

Mn(2+) is bound by residues His9, Asp13, Asp15, Asp75, His97, and Asp149.

Belongs to the PPase class C family. The cofactor is Mn(2+).

Its subcellular location is the cytoplasm. It catalyses the reaction diphosphate + H2O = 2 phosphate + H(+). The protein is Probable manganese-dependent inorganic pyrophosphatase of Bacillus cereus (strain B4264).